Consider the following 297-residue polypeptide: Phosphatidylinositol N-acetylglucosaminyltransferase subunit C (297 aa).

Helical transmembrane passes span 51–71 (VVFE…FVVI), 80–100 (LAPH…YVLF), 117–137 (WADL…SPVL), 153–173 (SVFM…AAIV), 174–194 (SSTL…SRLP), 196–216 (SLHA…WPML), 227–244 (SYVG…GGLL), and 250–270 (GAVL…FYLI).

Belongs to the PIGC family. As to quaternary structure, component of the glycosylphosphatidylinositol-N-acetylglucosaminyltransferase (GPI-GnT) complex composed at least by PIGA, PIGC, PIGH, PIGP, PIGQ, PIGY and DPM2. Interacts with PIGQ. Interacts with the heterodimer PIGA:PIGH.

Its subcellular location is the endoplasmic reticulum membrane. The protein operates within glycolipid biosynthesis; glycosylphosphatidylinositol-anchor biosynthesis. Functionally, part of the glycosylphosphatidylinositol-N-acetylglucosaminyltransferase (GPI-GnT) complex that catalyzes the transfer of N-acetylglucosamine from UDP-N-acetylglucosamine to phosphatidylinositol and participates in the first step of GPI biosynthesis. This chain is Phosphatidylinositol N-acetylglucosaminyltransferase subunit C, found in Homo sapiens (Human).